A 689-amino-acid polypeptide reads, in one-letter code: MADNLVIVESPAKAKTIEKYLGKKYKVIASMGHVRDLPRSQMGVDTEDNYEPKYITIRGKGPVVKELKKHAKKAKNVFLASDPDREGEAIAWHLSKILELEDSKENRVVFNEITKDAVKESFKNPREIEMNLVDAQQARRILDRLVGYNISPVLWKKVKKGLSAGRVQSVALRLVIDRENEIRNFKPEEYWTIEGEFRYKKSKFNAKFLHYKNKPFKLKTKKDVEKITTALDGDQFEITNVTKKEKTRNPANPFTTSTLQQEAARKLNFKARKTMMVAQQLYEGIDLKKQGTIGLITYMRTDSTRISDTAKAEAKQYITNKYGESYTSKRKASGKQGDQDAHEAIRPSSTMRTPDDMKSFLTKDQYRLYKLIWERFVASQMAPAILDTVSLDITQGDIKFRANGQTIKFKGFMTLYVETKDDSDSEKENKLPKLEQGDKVTATQIEPAQHYTQPPPRYTEARLVKTLEELKIGRPSTYAPTIDTIQKRNYVKLESKRFVPTELGEIVHEQVKEYFPEIIDVEFTVNMETLLDKIAEGDITWRKVIDGFFSSFKQDVERAEEEMEKIEIKDEPAGEDCEVCGSPMVIKMGRYGKFMACSNFPDCRNTKAIVKSIGVKCPKCNDGDVVERKSKKNRVFYGCSKYPECDFISWDKPIGRDCPKCNQYLVENKKGKTTQVICSNCDYKEAAQK.

The region spanning 3–113 (DNLVIVESPA…KENRVVFNEI (111 aa)) is the Toprim domain. Mg(2+) contacts are provided by Glu-9 and Asp-82. A Topo IA-type catalytic domain is found at 129–557 (EMNLVDAQQA…FFSSFKQDVE (429 aa)). An interaction with DNA region spans residues 163 to 168 (SAGRVQ). Tyr-298 functions as the O-(5'-phospho-DNA)-tyrosine intermediate in the catalytic mechanism. The disordered stretch occupies residues 328 to 357 (SKRKASGKQGDQDAHEAIRPSSTMRTPDDM). 3 consecutive C4-type zinc fingers follow at residues 577–603 (CEVC…FPDC), 617–645 (CPKC…YPEC), and 658–681 (CPKC…CSNC).

This sequence belongs to the type IA topoisomerase family. As to quaternary structure, monomer. It depends on Mg(2+) as a cofactor.

The catalysed reaction is ATP-independent breakage of single-stranded DNA, followed by passage and rejoining.. Functionally, releases the supercoiling and torsional tension of DNA, which is introduced during the DNA replication and transcription, by transiently cleaving and rejoining one strand of the DNA duplex. Introduces a single-strand break via transesterification at a target site in duplex DNA. The scissile phosphodiester is attacked by the catalytic tyrosine of the enzyme, resulting in the formation of a DNA-(5'-phosphotyrosyl)-enzyme intermediate and the expulsion of a 3'-OH DNA strand. The free DNA strand then undergoes passage around the unbroken strand, thus removing DNA supercoils. Finally, in the religation step, the DNA 3'-OH attacks the covalent intermediate to expel the active-site tyrosine and restore the DNA phosphodiester backbone. The protein is DNA topoisomerase 1 of Staphylococcus aureus.